The following is a 115-amino-acid chain: Virulence-associated protein A' (115 aa).

Residues 16–70 (IKSDLDGLGINITEAAKALDVTRAALSEIINGKRGISAKMAWKLSKAFTNSDPEF) form the HTH cro/C1-type domain. Positions 27 to 46 (ITEAAKALDVTRAALSEIIN) form a DNA-binding region, H-T-H motif.

The protein belongs to the VapA/VapI family.

This chain is Virulence-associated protein A' (vapA'), found in Dichelobacter nodosus (Bacteroides nodosus).